We begin with the raw amino-acid sequence, 427 residues long: Trigger factor (427 aa).

The region spanning 163–248 is the PPIase FKBP-type domain; the sequence is GDTVVIDFVG…VHEVKAKEVP (86 aa).

Belongs to the FKBP-type PPIase family. Tig subfamily.

It localises to the cytoplasm. The enzyme catalyses [protein]-peptidylproline (omega=180) = [protein]-peptidylproline (omega=0). Functionally, involved in protein export. Acts as a chaperone by maintaining the newly synthesized protein in an open conformation. Functions as a peptidyl-prolyl cis-trans isomerase. The chain is Trigger factor from Streptococcus equi subsp. zooepidemicus (strain MGCS10565).